Reading from the N-terminus, the 298-residue chain is Vacuolar protein sorting-associated protein 26 (298 aa).

This sequence belongs to the VPS26 family. Component of the retromer complex which consists of vps29, vps6, vps35, vps5 and vps17. Component of a retromer subcomplex consisting of vps29, vps26 and vps35.

Plays a role in vesicular protein sorting. Required for the endosome-to-Golgi retrieval of the vacuolar protein sorting receptor pep1/vps10. Component of the membrane-associated retromer complex which is essential in endosome-to-Golgi retrograde transport. The vps29-vps26-vps35 subcomplex may be involved in cargo selection. This chain is Vacuolar protein sorting-associated protein 26 (vps26), found in Schizosaccharomyces pombe (strain 972 / ATCC 24843) (Fission yeast).